The following is a 2531-amino-acid chain: Serine/threonine-protein kinase ATR (2531 aa).

Residues 1490 to 2067 form the FAT domain; sequence LIVKVAETFG…MWQSAYLLRQ (578 aa). The region spanning 2192 to 2512 is the PI3K/PI4K catalytic domain; sequence FSDKVKVLHS…VSQLASSLIE (321 aa). A G-loop region spans residues 2198-2204; it reads VLHSNTK. Residues 2368–2376 form a catalytic loop region; that stretch reads GLGDRHTKN. Residues 2387–2411 form an activation loop region; sequence HVDFDMIFNKGETLGTPELVPFRLT. Residues 2499-2531 enclose the FATC domain; it reads HPMQVSQLASSLIELATSEEKLSEMYLGWMATL.

This sequence belongs to the PI3/PI4-kinase family. ATM subfamily. The cofactor is Mn(2+).

Its subcellular location is the nucleus. It carries out the reaction L-seryl-[protein] + ATP = O-phospho-L-seryl-[protein] + ADP + H(+). The enzyme catalyses L-threonyl-[protein] + ATP = O-phospho-L-threonyl-[protein] + ADP + H(+). Serine/threonine protein kinase which activates checkpoint signaling upon genotoxic stresses such as ionizing radiation (IR), ultraviolet light (UV), or DNA replication stalling, thereby acting as a DNA damage sensor. Recognizes the substrate consensus sequence [ST]-Q. Phosphorylates various proteins, which collectively inhibits DNA replication and mitosis and promotes DNA repair and recombination. Prevents mitotic catastrophe by functioning in the S-phase checkpoint and cooperating with atm-1 in the checkpoint response to double-strand breaks (DSBs) after ionizing radiation (IR) to induce cell cycle arrest or apoptosis via the cep-1/p53 pathway. In response to ionizing radiation, probably required for the association between the brc-1-brd-1 heterodimer and rad-51 and let-70 in order to activate E3-ubiquitin ligase activity of the heterodimer and induce ubiquitination at DNA damage sites. The polypeptide is Serine/threonine-protein kinase ATR (Caenorhabditis elegans).